Here is a 358-residue protein sequence, read N- to C-terminus: Magnesium-protoporphyrin IX monomethyl ester [oxidative] cyclase (358 aa).

The protein belongs to the AcsF family. Fe cation serves as cofactor.

The catalysed reaction is Mg-protoporphyrin IX 13-monomethyl ester + 3 NADPH + 3 O2 + 2 H(+) = 3,8-divinyl protochlorophyllide a + 3 NADP(+) + 5 H2O. It functions in the pathway porphyrin-containing compound metabolism; chlorophyll biosynthesis (light-independent). Its function is as follows. Catalyzes the formation of the isocyclic ring in chlorophyll biosynthesis. Mediates the cyclase reaction, which results in the formation of divinylprotochlorophyllide (Pchlide) characteristic of all chlorophylls from magnesium-protoporphyrin IX 13-monomethyl ester (MgPMME). The chain is Magnesium-protoporphyrin IX monomethyl ester [oxidative] cyclase from Trichodesmium erythraeum (strain IMS101).